The following is a 26-amino-acid chain: Oxyopinin-3a (26 aa).

Expressed by the venom gland.

It is found in the secreted. Functionally, may have cytolytic and antimicrobial activity. This Oxyopes takobius (Lynx spider) protein is Oxyopinin-3a.